A 479-amino-acid polypeptide reads, in one-letter code: Bifunctional protein HldE (479 aa).

Residues 1–319 (MTVILPDFLK…NVVQKYEYTK (319 aa)) are ribokinase. 195–198 (NMSE) contacts ATP. Residue aspartate 264 is part of the active site. Positions 346 to 479 (MTNGVFDILH…IDTMEINEIN (134 aa)) are cytidylyltransferase.

It in the N-terminal section; belongs to the carbohydrate kinase PfkB family. The protein in the C-terminal section; belongs to the cytidylyltransferase family. Homodimer.

It carries out the reaction D-glycero-beta-D-manno-heptose 7-phosphate + ATP = D-glycero-beta-D-manno-heptose 1,7-bisphosphate + ADP + H(+). The catalysed reaction is D-glycero-beta-D-manno-heptose 1-phosphate + ATP + H(+) = ADP-D-glycero-beta-D-manno-heptose + diphosphate. It functions in the pathway nucleotide-sugar biosynthesis; ADP-L-glycero-beta-D-manno-heptose biosynthesis; ADP-L-glycero-beta-D-manno-heptose from D-glycero-beta-D-manno-heptose 7-phosphate: step 1/4. It participates in nucleotide-sugar biosynthesis; ADP-L-glycero-beta-D-manno-heptose biosynthesis; ADP-L-glycero-beta-D-manno-heptose from D-glycero-beta-D-manno-heptose 7-phosphate: step 3/4. In terms of biological role, catalyzes the phosphorylation of D-glycero-D-manno-heptose 7-phosphate at the C-1 position to selectively form D-glycero-beta-D-manno-heptose-1,7-bisphosphate. Catalyzes the ADP transfer from ATP to D-glycero-beta-D-manno-heptose 1-phosphate, yielding ADP-D-glycero-beta-D-manno-heptose. The polypeptide is Bifunctional protein HldE (Blochmanniella floridana).